The sequence spans 284 residues: MDAIKKKMQMLKLDKENALDRAEQAETDKKAAEERSKQLEDDLVALQKKLKATEDELDKYSEALKDAQEKLELAEKKATDAEGDVASLNRRIQLVEEELDRAQERLATALQKLEEAEKAADESERGMKVIENRALKDEEKMELQEIQLKEAKHIAEEADRKYEEVARKLVIVEGELERTEERAELNEGKCSELEEELKTVTNNMKSLEAQAEKYSAKEDKYEEEIKVLTDKLKEAETRAEFAERSVAKLEKTIDDLEDELYAQKLKYKAISEELDHALNDMTSI.

The disordered stretch occupies residues 1–37 (MDAIKKKMQMLKLDKENALDRAEQAETDKKAAEERSK). Residues 1–284 (MDAIKKKMQM…DHALNDMTSI (284 aa)) adopt a coiled-coil conformation. Basic and acidic residues predominate over residues 12–37 (KLDKENALDRAEQAETDKKAAEERSK).

This sequence belongs to the tropomyosin family. In terms of assembly, homodimer. Heterodimer of an alpha (TPM1, TPM3 or TPM4) and a beta (TPM2) chain.

The protein localises to the cytoplasm. The protein resides in the cytoskeleton. Functionally, binds to actin filaments in muscle and non-muscle cells. Plays a central role, in association with the troponin complex, in the calcium dependent regulation of vertebrate striated muscle contraction. Smooth muscle contraction is regulated by interaction with caldesmon. In non-muscle cells is implicated in stabilizing cytoskeleton actin filaments. In Danio rerio (Zebrafish), this protein is Tropomyosin alpha-1 chain (tpma).